A 600-amino-acid chain; its full sequence is Putative DNA 3'-5' helicase Rad25 (600 aa).

The 150-residue stretch at Val-253–Ile-402 folds into the Helicase ATP-binding domain. Gly-266–Thr-273 provides a ligand contact to ATP. Residues Asp-356–His-359 carry the DEAH box motif. The 144-residue stretch at Glu-457 to Pro-600 folds into the Helicase C-terminal domain. The segment at Arg-569 to Pro-600 is disordered. Positions Arg-590–Pro-600 are enriched in basic and acidic residues.

Belongs to the helicase family. RAD25/XPB subfamily.

The catalysed reaction is Couples ATP hydrolysis with the unwinding of duplex DNA by translocating in the 3'-5' direction.. It catalyses the reaction ATP + H2O = ADP + phosphate + H(+). This is Putative DNA 3'-5' helicase Rad25 from Halobacterium salinarum (strain ATCC 700922 / JCM 11081 / NRC-1) (Halobacterium halobium).